Reading from the N-terminus, the 217-residue chain is Homologous-pairing protein 2 homolog (217 aa).

The tract at residues 89-117 (LDASIMALTAKVQGLQQSCRHMEAELKEL) is interaction with NR3C1, homodimerization and transcriptional activation almost abolished when missing. Residues 93–153 (IMALTAKVQG…LKNIKAATNH (61 aa)) are a coiled coil. Positions 118 to 182 (TSALTTPEMQ…WRKRKRMTTE (65 aa)) are DNA-binding. Positions 118–182 (TSALTTPEMQ…WRKRKRMTTE (65 aa)) are interaction with NR3C1 decreased when missing.

Belongs to the HOP2 family. In terms of assembly, forms a stable heterodimer with MND1. Interacts with PSMC3/TBP1. Interacts with the DNA-binding domain of the nuclear receptors NR3C1/GR, ESR2/ER-beta, THRB and RXRA. Post-translationally, phosphorylated by PKA, PKC and MAPK.

Its subcellular location is the nucleus. Its function is as follows. Plays an important role in meiotic recombination. Stimulates DMC1-mediated strand exchange required for pairing homologous chromosomes during meiosis. The complex PSMC3IP/MND1 binds DNA, stimulates the recombinase activity of DMC1 as well as DMC1 D-loop formation from double-strand DNA. This complex stabilizes presynaptic RAD51 and DMC1 filaments formed on single strand DNA to capture double-strand DNA. This complex stimulates both synaptic and presynaptic critical steps in RAD51 and DMC1-promoted homologous pairing. May inhibit HIV-1 viral protein TAT activity and modulate the activity of proteasomes through association with PSMC3. Plays a role as a coactivator in nuclear receptor-mediated transcription. This Rattus norvegicus (Rat) protein is Homologous-pairing protein 2 homolog (Psmc3ip).